Reading from the N-terminus, the 461-residue chain is RNA-binding protein ZCH321 (461 aa).

2 consecutive C3H1-type zinc fingers follow at residues leucine 63–leucine 85 and alanine 181–lysine 208. The segment at threonine 224–valine 243 is disordered. The MKT1-binding motif motif lies at tryptophan 446–tyrosine 451.

Its function is as follows. RNA-binding protein involved in regulation of mRNA stability. Promotes mRNA stabilization by recruiting MKT1 and PBP1. Stabilizes transcripts encoding mitochondrial proteins. This Trypanosoma brucei brucei (strain 927/4 GUTat10.1) protein is RNA-binding protein ZCH321.